We begin with the raw amino-acid sequence, 188 residues long: Peptidyl-tRNA hydrolase (188 aa).

Phe14 provides a ligand contact to tRNA. His19 acts as the Proton acceptor in catalysis. TRNA is bound by residues Tyr64, Asn66, and Asn112.

It belongs to the PTH family. Monomer.

Its subcellular location is the cytoplasm. It carries out the reaction an N-acyl-L-alpha-aminoacyl-tRNA + H2O = an N-acyl-L-amino acid + a tRNA + H(+). In terms of biological role, hydrolyzes ribosome-free peptidyl-tRNAs (with 1 or more amino acids incorporated), which drop off the ribosome during protein synthesis, or as a result of ribosome stalling. Its function is as follows. Catalyzes the release of premature peptidyl moieties from peptidyl-tRNA molecules trapped in stalled 50S ribosomal subunits, and thus maintains levels of free tRNAs and 50S ribosomes. The polypeptide is Peptidyl-tRNA hydrolase (Aster yellows witches'-broom phytoplasma (strain AYWB)).